We begin with the raw amino-acid sequence, 300 residues long: Putative S-adenosyl-L-methionine-dependent methyltransferase MAB_4328c (300 aa).

Residues Asp126 and 155 to 156 (DL) each bind S-adenosyl-L-methionine.

It belongs to the UPF0677 family.

Functionally, exhibits S-adenosyl-L-methionine-dependent methyltransferase activity. This Mycobacteroides abscessus (strain ATCC 19977 / DSM 44196 / CCUG 20993 / CIP 104536 / JCM 13569 / NCTC 13031 / TMC 1543 / L948) (Mycobacterium abscessus) protein is Putative S-adenosyl-L-methionine-dependent methyltransferase MAB_4328c.